Here is a 243-residue protein sequence, read N- to C-terminus: Probable transcriptional regulatory protein Patl_0550 (243 aa).

The protein belongs to the TACO1 family.

The protein resides in the cytoplasm. The sequence is that of Probable transcriptional regulatory protein Patl_0550 from Pseudoalteromonas atlantica (strain T6c / ATCC BAA-1087).